The primary structure comprises 51 residues: Large ribosomal subunit protein eL39 (51 aa).

The interval 1–23 (MSALKKSFIKRKLAKKQKQNRPM) is disordered. A compositionally biased stretch (basic residues) spans 7–19 (SFIKRKLAKKQKQ).

Belongs to the eukaryotic ribosomal protein eL39 family. Interacts with impact.

This Caenorhabditis elegans protein is Large ribosomal subunit protein eL39 (rpl-39).